The sequence spans 231 residues: Octanoyl-[acyl-carrier-protein]:protein N-octanoyltransferase LIPT2, mitochondrial (231 aa).

In terms of domain architecture, BPL/LPL catalytic spans 41–224 (GTKAGVLLVC…AFKETFKCTL (184 aa)). The residue at position 43 (Lys-43) is an N6-succinyllysine. Residues 85 to 92 (RGGLATFH), 154 to 156 (AIG), and 167 to 169 (GLA) contribute to the substrate site. Catalysis depends on Cys-185, which acts as the Acyl-thioester intermediate.

The protein belongs to the LipB family.

Its subcellular location is the mitochondrion. The enzyme catalyses octanoyl-[ACP] + L-lysyl-[protein] = N(6)-octanoyl-L-lysyl-[protein] + holo-[ACP] + H(+). The protein operates within protein modification; protein lipoylation via endogenous pathway; protein N(6)-(lipoyl)lysine from octanoyl-[acyl-carrier-protein]: step 1/2. Functionally, catalyzes the transfer of endogenously produced octanoic acid from octanoyl-acyl-carrier-protein onto the lipoyl domains of lipoate-dependent enzymes such as the protein H of the glycine cleavage system (GCSH). Lipoyl-ACP can also act as a substrate although octanoyl-ACP is likely to be the physiological substrate. The chain is Octanoyl-[acyl-carrier-protein]:protein N-octanoyltransferase LIPT2, mitochondrial from Mus musculus (Mouse).